Here is a 276-residue protein sequence, read N- to C-terminus: Putative pyruvate, phosphate dikinase regulatory protein (276 aa).

Residue 152-159 (GISRTSKT) participates in ADP binding.

The protein belongs to the pyruvate, phosphate/water dikinase regulatory protein family. PDRP subfamily.

It carries out the reaction N(tele)-phospho-L-histidyl/L-threonyl-[pyruvate, phosphate dikinase] + ADP = N(tele)-phospho-L-histidyl/O-phospho-L-threonyl-[pyruvate, phosphate dikinase] + AMP + H(+). It catalyses the reaction N(tele)-phospho-L-histidyl/O-phospho-L-threonyl-[pyruvate, phosphate dikinase] + phosphate + H(+) = N(tele)-phospho-L-histidyl/L-threonyl-[pyruvate, phosphate dikinase] + diphosphate. Its function is as follows. Bifunctional serine/threonine kinase and phosphorylase involved in the regulation of the pyruvate, phosphate dikinase (PPDK) by catalyzing its phosphorylation/dephosphorylation. The polypeptide is Putative pyruvate, phosphate dikinase regulatory protein (Staphylococcus carnosus (strain TM300)).